The following is a 249-amino-acid chain: ATP synthase subunit a, chloroplastic (249 aa).

Helical transmembrane passes span 40–60 (QVLI…VLAI), 97–117 (VPFI…GALL), 136–156 (INTT…AGLS), 201–221 (LVVV…VMFL), and 222–242 (GLFT…AYIG).

Belongs to the ATPase A chain family. F-type ATPases have 2 components, CF(1) - the catalytic core - and CF(0) - the membrane proton channel. CF(1) has five subunits: alpha(3), beta(3), gamma(1), delta(1), epsilon(1). CF(0) has four main subunits: a, b, b' and c.

Its subcellular location is the plastid. It localises to the chloroplast thylakoid membrane. Key component of the proton channel; it plays a direct role in the translocation of protons across the membrane. The protein is ATP synthase subunit a, chloroplastic of Lepidium virginicum (Virginia pepperweed).